The chain runs to 263 residues: Undecaprenyl-diphosphatase 3 (263 aa).

8 consecutive transmembrane segments (helical) span residues glycine 15 to phenylalanine 37, alanine 42 to tryptophan 62, leucine 83 to isoleucine 103, valine 106 to valine 126, isoleucine 142 to phenylalanine 162, alanine 183 to isoleucine 203, leucine 216 to leucine 236, and valine 242 to isoleucine 262.

The protein belongs to the UppP family.

It is found in the cell membrane. The enzyme catalyses di-trans,octa-cis-undecaprenyl diphosphate + H2O = di-trans,octa-cis-undecaprenyl phosphate + phosphate + H(+). Functionally, catalyzes the dephosphorylation of undecaprenyl diphosphate (UPP). Confers resistance to bacitracin. This is Undecaprenyl-diphosphatase 3 from Bacillus thuringiensis subsp. konkukian (strain 97-27).